Reading from the N-terminus, the 58-residue chain is UPF0391 membrane protein GM21_0108 (58 aa).

Helical transmembrane passes span 4–24 (WALI…GGIA) and 33–53 (VLFY…LLAG).

This sequence belongs to the UPF0391 family.

The protein resides in the cell membrane. This is UPF0391 membrane protein GM21_0108 from Geobacter sp. (strain M21).